The sequence spans 284 residues: Bifunctional protein FolD (284 aa).

166-168 serves as a coordination point for NADP(+); it reads GAS.

It belongs to the tetrahydrofolate dehydrogenase/cyclohydrolase family. As to quaternary structure, homodimer.

The enzyme catalyses (6R)-5,10-methylene-5,6,7,8-tetrahydrofolate + NADP(+) = (6R)-5,10-methenyltetrahydrofolate + NADPH. It catalyses the reaction (6R)-5,10-methenyltetrahydrofolate + H2O = (6R)-10-formyltetrahydrofolate + H(+). The protein operates within one-carbon metabolism; tetrahydrofolate interconversion. Functionally, catalyzes the oxidation of 5,10-methylenetetrahydrofolate to 5,10-methenyltetrahydrofolate and then the hydrolysis of 5,10-methenyltetrahydrofolate to 10-formyltetrahydrofolate. This is Bifunctional protein FolD from Legionella pneumophila subsp. pneumophila (strain Philadelphia 1 / ATCC 33152 / DSM 7513).